Consider the following 404-residue polypeptide: Glucosyl-3-phosphoglycerate synthase (404 aa).

Residue Asp146 coordinates a divalent metal cation. 188–190 (GRV) serves as a coordination point for (2R)-3-phosphoglycerate. Residue His270 coordinates a divalent metal cation.

Belongs to the glycosyltransferase 2 family. The cofactor is Mn(2+). Co(2+) serves as cofactor. It depends on Mg(2+) as a cofactor.

It carries out the reaction an NDP-alpha-D-glucose + (2R)-3-phosphoglycerate = (2R)-2-O-(alpha-D-glucopyranosyl)-3-phospho-glycerate + a ribonucleoside 5'-diphosphate + H(+). Its function is as follows. Involved in the biosynthesis of 6-O-methylglucose lipopolysaccarides (MGLPs). Catalyzes the transfer of a glucose (Glc) moiety from uridine diphosphate (UDP-Glc) to the position 2 of 3-phospho-D-glycerate (3-PGA) to form glucosyl-3-phosphoglycerate (GPG). This Methanococcoides burtonii (strain DSM 6242 / NBRC 107633 / OCM 468 / ACE-M) protein is Glucosyl-3-phosphoglycerate synthase.